The chain runs to 309 residues: Pantothenate synthetase (309 aa).

Thr2 carries the post-translational modification N-acetylthreonine. An ATP-binding site is contributed by 40–47; the sequence is MGALHEGH. The active-site Proton donor is the His47. Residue Gln72 participates in (R)-pantoate binding. Gln72 is a binding site for beta-alanine. Residues Asp88, Asp89, and Gln92 each contribute to the Mg(2+) site. Position 158 to 161 (158 to 161) interacts with ATP; it reads GEKD. Position 164 (Gln164) interacts with (R)-pantoate. ATP contacts are provided by residues Val187 and 195–198; that span reads MSSR.

The protein belongs to the pantothenate synthetase family.

It localises to the cytoplasm. The catalysed reaction is (R)-pantoate + beta-alanine + ATP = (R)-pantothenate + AMP + diphosphate + H(+). It participates in cofactor biosynthesis; (R)-pantothenate biosynthesis; (R)-pantothenate from (R)-pantoate and beta-alanine: step 1/1. Its activity is regulated as follows. Pantothenate exhibits uncompetitive inhibition toward both D-pantoate and ATP, and non-competitive inhibition toward beta-alanine. AMPCPP exhibits competitive inhibition toward ATP, uncompetitive inhibition toward beta-alanine, and non-competitive inhibition toward D-pantoate. The enzyme is most active in the presence of magnesium or manganese. Other divalent cations (cobalt, nickel, zinc) are less effective. Its function is as follows. Catalyzes the condensation of pantoate with beta-alanine in an ATP-dependent reaction via a pantoyl-adenylate intermediate. This is Pantothenate synthetase (panC) from Mycobacterium tuberculosis (strain ATCC 25618 / H37Rv).